Reading from the N-terminus, the 334-residue chain is Amino acid--[acyl-carrier-protein] ligase 2 (334 aa).

Position 131 (cysteine 131) interacts with Zn(2+). ATP-binding positions include arginine 159, glutamate 161, and 168 to 169 (RL). Glutamate 176 is a binding site for Zn(2+). Glutamate 176 is a binding site for an L-alpha-amino acid. Residues lysine 235 and 250–253 (ACMS) contribute to the ATP site. Residue cysteine 279 coordinates Zn(2+). An ATP-binding site is contributed by arginine 286.

The protein belongs to the class-II aminoacyl-tRNA synthetase family. Amino acid--[acyl-carrier-protein] ligase subfamily. In terms of assembly, homodimer. Zn(2+) serves as cofactor.

The enzyme catalyses an L-alpha-amino acid + holo-[ACP] + ATP = an L-alpha-aminoacyl-[ACP] + AMP + diphosphate. Its function is as follows. Catalyzes the ATP-dependent activation of L-glycine and its transfer to the phosphopantetheine prosthetic group covalently attached to the vicinal carrier protein blr6284 of yet unknown function. May participate in nonribosomal peptide synthesis or related processes. L-alanine is a poor substrate whereas L-serine or D-amino acids are not substrates for ATP-dependent activation. Does not display tRNA aminoacylation activity. The protein is Amino acid--[acyl-carrier-protein] ligase 2 of Bradyrhizobium diazoefficiens (strain JCM 10833 / BCRC 13528 / IAM 13628 / NBRC 14792 / USDA 110).